The following is a 181-amino-acid chain: uncharacterized protein (181 aa).

This is an uncharacterized protein from Enterobacteria phage T4 (Bacteriophage T4).